The primary structure comprises 291 residues: Elongation factor Ts (291 aa).

The tract at residues 84–87 is involved in Mg(2+) ion dislocation from EF-Tu; sequence TDFV.

The protein belongs to the EF-Ts family.

The protein resides in the cytoplasm. Associates with the EF-Tu.GDP complex and induces the exchange of GDP to GTP. It remains bound to the aminoacyl-tRNA.EF-Tu.GTP complex up to the GTP hydrolysis stage on the ribosome. The sequence is that of Elongation factor Ts from Bifidobacterium adolescentis (strain ATCC 15703 / DSM 20083 / NCTC 11814 / E194a).